The primary structure comprises 241 residues: MNMGGSSSTAAKKATCKISMLWNWYTIDTCFIARSWRNDTKGKFAGSCIGCFALVVVAQWLTRFSRQFDVELLKRQKIKHLASYSPEEYVVKCGEEDAKSDIEELQGFYNEPSWKTTLISLQKSFIYSFYVWGPRRLNEPEDDLLKKVLSCCTLITPVDLYPTFLDHMIRVTIFVLQWGLSYIIMLLFMYYNGYIIISCLIGAIVGRFIFCYEPLGSLGANGSAQGTVSYDKESDDRKCCL.

Residues 1–41 (MNMGGSSSTAAKKATCKISMLWNWYTIDTCFIARSWRNDTK) are Lumenal-facing. Residues 42–62 (GKFAGSCIGCFALVVVAQWLT) form a helical membrane-spanning segment. The Cytoplasmic segment spans residues 63–159 (RFSRQFDVEL…SCCTLITPVD (97 aa)). The chain crosses the membrane as a helical span at residues 160 to 180 (LYPTFLDHMIRVTIFVLQWGL). The Lumenal segment spans residues 181–182 (SY). A helical membrane pass occupies residues 183–203 (IIMLLFMYYNGYIIISCLIGA). Residues 204-241 (IVGRFIFCYEPLGSLGANGSAQGTVSYDKESDDRKCCL) lie on the Cytoplasmic side of the membrane.

It belongs to the copper transporter (Ctr) (TC 1.A.56) family. SLC31A subfamily.

It is found in the cytoplasmic vesicle membrane. Its function is as follows. Required for high affinity copper (probably reduced Cu I) transport into the cell. The polypeptide is Copper transport protein CTR3 (CTR3) (Saccharomyces cerevisiae (strain ATCC 204508 / S288c) (Baker's yeast)).